Reading from the N-terminus, the 600-residue chain is Copine-A (600 aa).

2 C2 domains span residues 1-111 and 116-246; these read MNLK…TVCL and KSGK…NVIN. Asp-23, Asp-29, Asp-82, Asp-84, Asp-89, Asp-151, Asp-158, Asp-215, Asp-217, and Asp-223 together coordinate Ca(2+). The VWFA domain maps to 286–503; that stretch reads NLIVGIDCTA…ELAAEVLREI (218 aa). Residues 535-549 are compositionally biased toward low complexity; the sequence is YDNPTTTTTATSPST. The tract at residues 535–583 is disordered; that stretch reads YDNPTTTTTATSPSTGIDLNKGSNVGLNLTKTESSPSPSGGAGIDLNKG. Polar residues predominate over residues 555 to 572; that stretch reads KGSNVGLNLTKTESSPSP.

It belongs to the copine family. Ca(2+) serves as cofactor.

Its subcellular location is the cytoplasm. It localises to the membrane. Its function is as follows. Required for cytokinesis, contractile vacuole function and development. The sequence is that of Copine-A (cpnA) from Dictyostelium discoideum (Social amoeba).